The primary structure comprises 289 residues: NAD kinase (289 aa).

Asp-63 (proton acceptor) is an active-site residue. NAD(+)-binding positions include 63 to 64, Arg-68, 138 to 139, Arg-149, Asp-168, 179 to 184, and Gln-238; these read DG, ND, and TGYSLS.

The protein belongs to the NAD kinase family. It depends on a divalent metal cation as a cofactor.

The protein resides in the cytoplasm. It carries out the reaction NAD(+) + ATP = ADP + NADP(+) + H(+). Involved in the regulation of the intracellular balance of NAD and NADP, and is a key enzyme in the biosynthesis of NADP. Catalyzes specifically the phosphorylation on 2'-hydroxyl of the adenosine moiety of NAD to yield NADP. The sequence is that of NAD kinase from Gemmatimonas aurantiaca (strain DSM 14586 / JCM 11422 / NBRC 100505 / T-27).